The sequence spans 85 residues: Cloacin immunity protein (85 aa).

Lysine 12 is subject to N6-methyllysine.

The protein belongs to the cloacin immunity protein family.

Functionally, this protein complexes with cloacin protein in equimolar amounts and inhibits it by binding with high affinity to the C-terminal catalytic domain of cloacin. The polypeptide is Cloacin immunity protein (cim) (Escherichia coli).